The primary structure comprises 471 residues: MKIKTRFAPSPTGYLHVGGARTALYSWLFARNHGGEFVLRIEDTDLERSTPEAIEAIMDGMNWLSLEWDEGPYYQTKRFDRYNAVIDQMLEEGTAYKCYCSKERLEALREEQMAKGEKPRYDGRCRHSHEHHADDEPCVVRFANPQEGSVVFDDQIRGPIEFSNQELDDLIIRRTDGSPTYNFCVVVDDWDMEITHVIRGEDHINNTPRQINILKALKAPVPVYAHVSMINGDDGKKLSKRHGAVSVMQYRDDGYLPEALLNYLVRLGWSHGDQEIFTREEMIKYFTLNAVSKSASAFNTDKLLWLNHHYINALPPEYVATHLQWHIEQENIDTRNGPQLADLVKLLGERCKTLKEMAQSCRYFYEDFAEFDADAAKKHLRPVARQPLEVVRDKLAAITDWTAENVHHAIQATADELEVGMGKVGMPLRVAVTGAGQSPALDVTVHAIGKTRSIERINKALDFIAERENQQ.

Positions 9 to 19 (PSPTGYLHVGG) match the 'HIGH' region motif. Residues C98, C100, C125, and H127 each contribute to the Zn(2+) site. A 'KMSKS' region motif is present at residues 237 to 241 (KLSKR). K240 is a binding site for ATP.

The protein belongs to the class-I aminoacyl-tRNA synthetase family. Glutamate--tRNA ligase type 1 subfamily. Monomer. Zn(2+) serves as cofactor.

It is found in the cytoplasm. It catalyses the reaction tRNA(Glu) + L-glutamate + ATP = L-glutamyl-tRNA(Glu) + AMP + diphosphate. Functionally, catalyzes the attachment of glutamate to tRNA(Glu) in a two-step reaction: glutamate is first activated by ATP to form Glu-AMP and then transferred to the acceptor end of tRNA(Glu). The sequence is that of Glutamate--tRNA ligase from Escherichia coli O9:H4 (strain HS).